The following is a 328-amino-acid chain: MSLKKIIDVKSVNTLLKKGIINKEGVRIIDCSFAVAPRPDWKEFEQEGYGDFKNLMAEPSPSRNLYLAGHIPEAVHVDLDIATYPSRYQRFQQYRADLFEEYAQMVGLNNKEHFIFYGKGAFGGMLFASKVAWIFKSYGHENISLVDGGFDSWKRNGFEVSTELVKLPAGNFKAEDNFKKYVITFQELEAKKDGEDKQFIEKTSEINFLDSRIRGQFDGTQETGLDPHLVNGTRIAGFKNLPSAELLVKGGNLKSEEEIKSWLTQNGYVENQPTITSCNAGIQAALLAYVIDAVKPSQNPPRVYNGSLKEMELRAPKKISEGPQHLPH.

Rhodanese domains lie at 22–162 (NKEG…EVST) and 202–320 (KTSE…KKIS). Cys278 functions as the Cysteine persulfide intermediate in the catalytic mechanism.

The catalysed reaction is thiosulfate + hydrogen cyanide = thiocyanate + sulfite + 2 H(+). The protein is Putative thiosulfate sulfurtransferase mpst-1 (mpst-1) of Caenorhabditis elegans.